Consider the following 234-residue polypeptide: Sugar fermentation stimulation protein A (234 aa).

A DNA-binding region (H-T-H motif) is located at residues 201-220 (LLSEAQQRGVEILAYKAELS).

This sequence belongs to the SfsA family.

Functionally, binds to DNA non-specifically. Could be a regulatory factor involved in maltose metabolism. The protein is Sugar fermentation stimulation protein A of Escherichia coli (strain SMS-3-5 / SECEC).